Here is a 247-residue protein sequence, read N- to C-terminus: MMIYPTMELLDGRCVTLDKGNLDAPMIWHVDPVETAKGFAEAGAEWMHLTDFNALQGDSSNQDLVEELIRTAGLPIQLGGGIRSREQAEFWIEKGVGRVVIGTMAAYDPAAVAELAKYYPDQVVLAVDVWQGQVMTEGWRKSGAWTPEAFVKAFGNAPFAGILVTDIDSDMSDLDAQLGLISGLAEQAHSPVIASGVVRSKDDISRLKYLPNISGALVGRALFNKTITLEEAMETAQPNPEPVAEFL.

The Proton acceptor role is filled by glutamate 8. Aspartate 128 functions as the Proton donor in the catalytic mechanism.

It belongs to the HisA/HisF family.

Its subcellular location is the cytoplasm. The catalysed reaction is 1-(5-phospho-beta-D-ribosyl)-5-[(5-phospho-beta-D-ribosylamino)methylideneamino]imidazole-4-carboxamide = 5-[(5-phospho-1-deoxy-D-ribulos-1-ylimino)methylamino]-1-(5-phospho-beta-D-ribosyl)imidazole-4-carboxamide. It functions in the pathway amino-acid biosynthesis; L-histidine biosynthesis; L-histidine from 5-phospho-alpha-D-ribose 1-diphosphate: step 4/9. In Ruegeria sp. (strain TM1040) (Silicibacter sp.), this protein is 1-(5-phosphoribosyl)-5-[(5-phosphoribosylamino)methylideneamino] imidazole-4-carboxamide isomerase 1.